Reading from the N-terminus, the 308-residue chain is tRNA pseudouridine synthase B (308 aa).

Catalysis depends on D51, which acts as the Nucleophile.

The protein belongs to the pseudouridine synthase TruB family. Type 1 subfamily.

It carries out the reaction uridine(55) in tRNA = pseudouridine(55) in tRNA. Functionally, responsible for synthesis of pseudouridine from uracil-55 in the psi GC loop of transfer RNAs. This Aromatoleum aromaticum (strain DSM 19018 / LMG 30748 / EbN1) (Azoarcus sp. (strain EbN1)) protein is tRNA pseudouridine synthase B.